The primary structure comprises 312 residues: Methionyl-tRNA formyltransferase (312 aa).

113–116 is a (6S)-5,6,7,8-tetrahydrofolate binding site; the sequence is SLLP.

The protein belongs to the Fmt family.

It catalyses the reaction L-methionyl-tRNA(fMet) + (6R)-10-formyltetrahydrofolate = N-formyl-L-methionyl-tRNA(fMet) + (6S)-5,6,7,8-tetrahydrofolate + H(+). Functionally, attaches a formyl group to the free amino group of methionyl-tRNA(fMet). The formyl group appears to play a dual role in the initiator identity of N-formylmethionyl-tRNA by promoting its recognition by IF2 and preventing the misappropriation of this tRNA by the elongation apparatus. This is Methionyl-tRNA formyltransferase from Francisella philomiragia subsp. philomiragia (strain ATCC 25017 / CCUG 19701 / FSC 153 / O#319-036).